The sequence spans 341 residues: MDSYVTVDPSFHSPRISLEILVPTKYAKLFTLKQLSRMLALSCKHRARQAANPVSKRTSRDRNGSKTMGQGPSAVAPQVSKGHNQQVDGGVCLAPVKSKRAVRREKRRTAAKKATNKAKTETKLVKKGGSSIHAPKAPKRTSYLSSLLSSPSGAKAKMGALSKPPQTKNAPDANEGGFTLTAITPAECRAEARRRFHPITGSSRGPYGFCTRSREGCGVCADCVEKKAHLDFNRSFDTIGTSRVIRVDSMMEEVAEDLASPSVLEPSGFWAPAEKQAPSGEGHSRRRCDVVTLARVTPVLRMLRKVDPTLVDNRLLWEAAFRTVFPQRKCVYPHGCFCDRG.

The interval 46 to 175 (RARQAANPVS…QTKNAPDANE (130 aa)) is disordered. Over residues 97–116 (KSKRAVRREKRRTAAKKATN) the composition is skewed to basic residues. The span at 142–152 (SYLSSLLSSPS) shows a compositional bias: low complexity.

The protein belongs to the nepovirus protein P3 family.

The chain is Protein P3 from Vitis rupestris (Grape).